The following is a 585-amino-acid chain: Glutamine--tRNA ligase (585 aa).

Positions 51-61 (PEPNGYLHIGH) match the 'HIGH' region motif. ATP is bound by residues 52-54 (EPN) and 58-64 (HIGHAKS). Positions 84 and 238 each coordinate L-glutamine. ATP-binding positions include T257 and 292–293 (RL). The short motif at 299-303 (ITSKR) is the 'KMSKS' region element.

It belongs to the class-I aminoacyl-tRNA synthetase family. Monomer.

It is found in the cytoplasm. It carries out the reaction tRNA(Gln) + L-glutamine + ATP = L-glutaminyl-tRNA(Gln) + AMP + diphosphate. The protein is Glutamine--tRNA ligase of Cupriavidus necator (strain ATCC 17699 / DSM 428 / KCTC 22496 / NCIMB 10442 / H16 / Stanier 337) (Ralstonia eutropha).